A 97-amino-acid polypeptide reads, in one-letter code: Large ribosomal subunit protein bL27 (97 aa).

The tract at residues 14-36 (HKKGGGSTSNGRDSQAKRLGAKA) is disordered.

It belongs to the bacterial ribosomal protein bL27 family.

This Streptococcus sanguinis (strain SK36) protein is Large ribosomal subunit protein bL27.